A 47-amino-acid polypeptide reads, in one-letter code: Cytochrome b559 subunit beta (47 aa).

A helical membrane pass occupies residues 22–38 (WLAVHTLAIPTVFFLGA). Heme is bound at residue H26.

The protein belongs to the PsbE/PsbF family. Heterodimer of an alpha subunit and a beta subunit. PSII is composed of 1 copy each of membrane proteins PsbA, PsbB, PsbC, PsbD, PsbE, PsbF, PsbH, PsbI, PsbJ, PsbK, PsbL, PsbM, PsbT, PsbX, PsbY, PsbZ, Psb30/Ycf12, peripheral proteins PsbO, CyanoQ (PsbQ), PsbU, PsbV and a large number of cofactors. It forms dimeric complexes. Heme b is required as a cofactor.

It localises to the cellular thylakoid membrane. This b-type cytochrome is tightly associated with the reaction center of photosystem II (PSII). PSII is a light-driven water:plastoquinone oxidoreductase that uses light energy to abstract electrons from H(2)O, generating O(2) and a proton gradient subsequently used for ATP formation. It consists of a core antenna complex that captures photons, and an electron transfer chain that converts photonic excitation into a charge separation. This chain is Cytochrome b559 subunit beta, found in Synechococcus sp. (strain JA-3-3Ab) (Cyanobacteria bacterium Yellowstone A-Prime).